A 486-amino-acid polypeptide reads, in one-letter code: Glutamate--tRNA ligase (486 aa).

The 'HIGH' region motif lies at 11–21 (PSPTGFLHIGG). Residues C108, C110, C136, and H138 each coordinate Zn(2+). A 'KMSKS' region motif is present at residues 253 to 257 (KLSKR). K256 contacts ATP.

It belongs to the class-I aminoacyl-tRNA synthetase family. Glutamate--tRNA ligase type 1 subfamily. Monomer. The cofactor is Zn(2+).

The protein resides in the cytoplasm. The catalysed reaction is tRNA(Glu) + L-glutamate + ATP = L-glutamyl-tRNA(Glu) + AMP + diphosphate. In terms of biological role, catalyzes the attachment of glutamate to tRNA(Glu) in a two-step reaction: glutamate is first activated by ATP to form Glu-AMP and then transferred to the acceptor end of tRNA(Glu). In Lysinibacillus sphaericus (strain C3-41), this protein is Glutamate--tRNA ligase.